A 550-amino-acid chain; its full sequence is Arginine--tRNA ligase (550 aa).

A 'HIGH' region motif is present at residues 130–140 (ANPTGPIHLGG).

The protein belongs to the class-I aminoacyl-tRNA synthetase family. As to quaternary structure, monomer.

The protein localises to the cytoplasm. It catalyses the reaction tRNA(Arg) + L-arginine + ATP = L-arginyl-tRNA(Arg) + AMP + diphosphate. This is Arginine--tRNA ligase from Corynebacterium diphtheriae (strain ATCC 700971 / NCTC 13129 / Biotype gravis).